The sequence spans 422 residues: Histidine--tRNA ligase (422 aa).

Belongs to the class-II aminoacyl-tRNA synthetase family. In terms of assembly, homodimer.

It is found in the cytoplasm. The catalysed reaction is tRNA(His) + L-histidine + ATP = L-histidyl-tRNA(His) + AMP + diphosphate + H(+). This is Histidine--tRNA ligase from Syntrophomonas wolfei subsp. wolfei (strain DSM 2245B / Goettingen).